Here is a 364-residue protein sequence, read N- to C-terminus: Popeye domain-containing protein 2 (364 aa).

Residue Asn-4 is glycosylated (N-linked (GlcNAc...) asparagine). Helical transmembrane passes span 37-57 and 77-97; these read LLLG…FGFL and IVLW…HLVY. The disordered stretch occupies residues 276 to 333; sequence ADAGPESEKGDEEVCEPAVSPPQATPTSLQQTPPCSTPPATTNFPAPPTRARLSRPDS. Residues 300–309 show a composition bias toward polar residues; it reads TPTSLQQTPP. Thr-361 is subject to Phosphothreonine.

Belongs to the popeye family. In terms of tissue distribution, expressed predominantly in the heart and in the skeletal muscle.

It localises to the membrane. It is found in the cell membrane. The protein resides in the sarcolemma. Important for the maintenance of cardiac function. Plays a regulatory function in heart rate dynamics mediated, at least in part, through cAMP-binding and, probably, by increasing cell surface expression of the potassium channel KCNK2 and enhancing current density. The protein is Popeye domain-containing protein 2 (POPDC2) of Homo sapiens (Human).